The chain runs to 206 residues: Pyridoxine/pyridoxamine 5'-phosphate oxidase (206 aa).

Residues 53–58 (RMVLLK), 68–69 (YT), lysine 75, and glutamine 97 each bind FMN. A substrate-binding site is contributed by lysine 58. Substrate-binding residues include tyrosine 115, arginine 119, and serine 123. FMN-binding positions include 132–133 (QS) and tryptophan 177. Substrate is bound at residue 183–185 (RLH). Residue arginine 187 coordinates FMN.

Belongs to the pyridoxamine 5'-phosphate oxidase family. As to quaternary structure, homodimer. FMN serves as cofactor.

It catalyses the reaction pyridoxamine 5'-phosphate + O2 + H2O = pyridoxal 5'-phosphate + H2O2 + NH4(+). The enzyme catalyses pyridoxine 5'-phosphate + O2 = pyridoxal 5'-phosphate + H2O2. Its pathway is cofactor metabolism; pyridoxal 5'-phosphate salvage; pyridoxal 5'-phosphate from pyridoxamine 5'-phosphate: step 1/1. It participates in cofactor metabolism; pyridoxal 5'-phosphate salvage; pyridoxal 5'-phosphate from pyridoxine 5'-phosphate: step 1/1. In terms of biological role, catalyzes the oxidation of either pyridoxine 5'-phosphate (PNP) or pyridoxamine 5'-phosphate (PMP) into pyridoxal 5'-phosphate (PLP). The sequence is that of Pyridoxine/pyridoxamine 5'-phosphate oxidase from Rhizobium johnstonii (strain DSM 114642 / LMG 32736 / 3841) (Rhizobium leguminosarum bv. viciae).